A 245-amino-acid polypeptide reads, in one-letter code: tRNA pseudouridine synthase A (245 aa).

The active-site Nucleophile is aspartate 52. Tyrosine 110 provides a ligand contact to substrate.

It belongs to the tRNA pseudouridine synthase TruA family. As to quaternary structure, homodimer.

The catalysed reaction is uridine(38/39/40) in tRNA = pseudouridine(38/39/40) in tRNA. Its function is as follows. Formation of pseudouridine at positions 38, 39 and 40 in the anticodon stem and loop of transfer RNAs. The protein is tRNA pseudouridine synthase A of Borrelia hermsii (strain HS1 / DAH).